A 923-amino-acid polypeptide reads, in one-letter code: Mitochondrial 10-formyltetrahydrofolate dehydrogenase (923 aa).

The transit peptide at 1 to 19 directs the protein to the mitochondrion; not cleaved; sequence MLWRGSQALRHFSTSRVYF. Residues 23 to 331 are hydrolase domain; sequence LKLALIGQSL…PASQYFSAGE (309 aa). Position 31 is a phosphoserine (serine 31). Lysine 60 is subject to N6-succinyllysine. 110-112 contributes to the (6R)-10-formyltetrahydrofolate binding site; that stretch reads QFI. The active-site Proton donor is the histidine 128. Aspartate 164 serves as a coordination point for (6R)-10-formyltetrahydrofolate. Residues 339-416 form the Carrier domain; it reads AEELKVAETI…DFIQKVVRRL (78 aa). Serine 375 carries the post-translational modification O-(pantetheine 4'-phosphoryl)serine. Residues 438 to 923 are aldehyde dehydrogenase domain; sequence TVKIPYQCFI…LKIKTVTLEY (486 aa). NADP(+)-binding positions include 592–594 and 618–621; these read IPW and KPAQ. A Phosphoserine modification is found at serine 650. NADP(+) is bound by residues 651 to 656 and 671 to 672; these read GGVAGQ and GS. Residue lysine 681 is modified to N6-succinyllysine. Glutamate 694 acts as the Proton acceptor in catalysis. 694–695 contributes to the NADP(+) binding site; the sequence is EL. Cysteine 728 acts as the Proton donor in catalysis. NADP(+) contacts are provided by residues lysine 778 and 825–827; that span reads ESF. Position 903 is an N6-acetyllysine (lysine 903).

It in the N-terminal section; belongs to the GART family. In the C-terminal section; belongs to the aldehyde dehydrogenase family. ALDH1L subfamily. Post-translationally, phosphopantetheinylation at Ser-375 by AASDHPPT is required for the formyltetrahydrofolate dehydrogenase activity.

The protein resides in the mitochondrion. The enzyme catalyses (6R)-10-formyltetrahydrofolate + NADP(+) + H2O = (6S)-5,6,7,8-tetrahydrofolate + CO2 + NADPH + H(+). Its function is as follows. Mitochondrial 10-formyltetrahydrofolate dehydrogenase that catalyzes the NADP(+)-dependent conversion of 10-formyltetrahydrofolate to tetrahydrofolate and carbon dioxide. This is Mitochondrial 10-formyltetrahydrofolate dehydrogenase from Mus musculus (Mouse).